A 290-amino-acid polypeptide reads, in one-letter code: MDKLIKSIAKSGSFRAYVLDSTETVRTAQEEHQSLSSSTVALGRTLIANQILAANQKGDSKVTVKVIGDSSFGHIISVADTKGNVKGYIQNAGVDVKKTASGEVIVGPFMGNGQFVVITDYGTGNPYTSSTPLVSGEIGEDLAYYLTESEQTPSAVGLNVLLDEKDKVKVAGGFMLQVLPEASEEEITRYEKRIQEMPAISTLLESEDHIEALLKAIYGEEDYKVLVEEDLQFTCDCSRQRFEAALMTLSKSDLKEMKEEDHGAEIVCQFCGKKYQFKESDLEEMINDKA.

Intrachain disulfides connect Cys235-Cys237 and Cys268-Cys271.

It belongs to the HSP33 family. Under oxidizing conditions two disulfide bonds are formed involving the reactive cysteines. Under reducing conditions zinc is bound to the reactive cysteines and the protein is inactive.

The protein localises to the cytoplasm. Redox regulated molecular chaperone. Protects both thermally unfolding and oxidatively damaged proteins from irreversible aggregation. Plays an important role in the bacterial defense system toward oxidative stress. The polypeptide is 33 kDa chaperonin (Streptococcus mutans serotype c (strain ATCC 700610 / UA159)).